Consider the following 365-residue polypeptide: 7-methylxanthine methyltransferase PCS1 (365 aa).

An S-adenosyl-L-homocysteine-binding site is contributed by Tyr19. Position 26 (Thr26) interacts with caffeine. S-adenosyl-L-homocysteine-binding residues include Cys62, Asn67, Asp99, Leu100, Ser134, and Phe135. Caffeine-binding residues include Tyr152, His155, and Trp156. Asn173 provides a ligand contact to Mg(2+). His221 provides a ligand contact to caffeine. Asp259, Phe261, and Asn262 together coordinate Mg(2+). Phe317 provides a ligand contact to caffeine.

The protein belongs to the methyltransferase superfamily. Type-7 methyltransferase family. Mg(2+) is required as a cofactor.

The enzyme catalyses 1,7-dimethylxanthine + S-adenosyl-L-methionine = caffeine + S-adenosyl-L-homocysteine + H(+). It carries out the reaction 7-methylxanthine + S-adenosyl-L-methionine = theobromine + S-adenosyl-L-homocysteine + H(+). The protein operates within alkaloid biosynthesis. Involved in the biosynthesis of caffeine. Catalyzes the conversion of 7-methylxanthine (7mX) to theobromine, and, to some extent, the conversion of paraxanthine to caffeine, but seems not able to convert theobromine to caffeine. In Camellia ptilophylla (Cocoa tea), this protein is 7-methylxanthine methyltransferase PCS1.